A 139-amino-acid polypeptide reads, in one-letter code: MSKNMRYPVKFEHDETGWAVMFPDIPEALTGGDTREEALAMAQDALVTAFDFYFEDRREIPTPSTKGEAFVEVPASIAAKVLLLNTMLQTRTSNAELARLLGTRPQEIQRIVSLSHSTKIDTIANALNALGKHLELVAI.

The region spanning M87–V137 is the HTH cro/C1-type domain. Residues E96–S113 constitute a DNA-binding region (H-T-H motif).

It belongs to the HicB antitoxin family. As to quaternary structure, probably forms a complex with the probable mRNA interferase HicA2 (its cognate toxin); when complexed with HicA inhibits the toxin activity.

Functionally, antitoxin component of a type II toxin-antitoxin (TA) system. Functions as an mRNA interferase antitoxin preventing effects of the HicA 2 toxin. This chain is Antitoxin HicB 2 (hicB2), found in Photorhabdus laumondii subsp. laumondii (strain DSM 15139 / CIP 105565 / TT01) (Photorhabdus luminescens subsp. laumondii).